The sequence spans 154 residues: NADPH-dependent 7-cyano-7-deazaguanine reductase (154 aa).

Over residues 1–11 (MAKKPVKDLKQ) the composition is skewed to basic and acidic residues. Residues 1–31 (MAKKPVKDLKQLGHATPVPASPEEATLERVP) form a disordered region. Residue C52 is the Thioimide intermediate of the active site. The active-site Proton donor is the D59. Residues 74–76 (IES) and 93–94 (HE) contribute to the substrate site.

It belongs to the GTP cyclohydrolase I family. QueF type 1 subfamily.

It localises to the cytoplasm. It catalyses the reaction 7-aminomethyl-7-carbaguanine + 2 NADP(+) = 7-cyano-7-deazaguanine + 2 NADPH + 3 H(+). Its pathway is tRNA modification; tRNA-queuosine biosynthesis. Its function is as follows. Catalyzes the NADPH-dependent reduction of 7-cyano-7-deazaguanine (preQ0) to 7-aminomethyl-7-deazaguanine (preQ1). The protein is NADPH-dependent 7-cyano-7-deazaguanine reductase of Parvibaculum lavamentivorans (strain DS-1 / DSM 13023 / NCIMB 13966).